Reading from the N-terminus, the 146-residue chain is Extracellular globin-2A (146 aa).

The 143-residue stretch at 4–146 (HCGPLQRLKV…EVIYPGIKHD (143 aa)) folds into the Globin domain. The cysteines at positions 5 and 134 are disulfide-linked. Histidine 97 provides a ligand contact to heme b.

This sequence belongs to the globin family. Disulfide bonded trimer of chains IIA, IIB, and IIC.

This chain is Extracellular globin-2A, found in Tylorrhynchus heterochetus (Japanese palolo worm).